A 558-amino-acid polypeptide reads, in one-letter code: Aspartate--tRNA ligase 2, cytoplasmic (558 aa).

Residues 1–18 (MSSESEIPPLSSSTAAAE) are compositionally biased toward low complexity. Positions 1–57 (MSSESEIPPLSSSTAAAEESGEKTSKKAAKKEAAKLEKLRRRQEQEEATRRTASISL) are disordered. Serine 2 is subject to N-acetylserine. The segment covering 20–50 (SGEKTSKKAAKKEAAKLEKLRRRQEQEEATR) has biased composition (basic and acidic residues). Residues 110–195 (VLIRGRVHTN…QVEIQVRKVY (86 aa)) constitute a DNA-binding region (OB). Glutamate 286 serves as a coordination point for L-aspartate. The aspartate stretch occupies residues 308–311 (QLHK). Residue arginine 330 participates in L-aspartate binding. Residues 330–332 (RAE), 338–340 (RHL), and glutamate 481 contribute to the ATP site. Residues glutamate 481 and serine 484 each coordinate Mg(2+). 2 residues coordinate L-aspartate: serine 484 and arginine 488. 529–532 (GLER) serves as a coordination point for ATP.

Belongs to the class-II aminoacyl-tRNA synthetase family. Type 2 subfamily.

The protein resides in the cytoplasm. It localises to the cytosol. Its subcellular location is the endoplasmic reticulum. The enzyme catalyses tRNA(Asp) + L-aspartate + ATP = L-aspartyl-tRNA(Asp) + AMP + diphosphate. Catalyzes the specific attachment of an amino acid to its cognate tRNA in a 2 step reaction: the amino acid (AA) is first activated by ATP to form AA-AMP and then transferred to the acceptor end of the tRNA. Involved in the perception of beta-aminobutyric acid (BABA) and required for BABA priming effect in disease resistance. The polypeptide is Aspartate--tRNA ligase 2, cytoplasmic (Arabidopsis thaliana (Mouse-ear cress)).